A 257-amino-acid polypeptide reads, in one-letter code: Imidazole glycerol phosphate synthase subunit HisF (257 aa).

Residues Asp-11 and Asp-130 contribute to the active site.

The protein belongs to the HisA/HisF family. In terms of assembly, heterodimer of HisH and HisF.

The protein resides in the cytoplasm. It carries out the reaction 5-[(5-phospho-1-deoxy-D-ribulos-1-ylimino)methylamino]-1-(5-phospho-beta-D-ribosyl)imidazole-4-carboxamide + L-glutamine = D-erythro-1-(imidazol-4-yl)glycerol 3-phosphate + 5-amino-1-(5-phospho-beta-D-ribosyl)imidazole-4-carboxamide + L-glutamate + H(+). Its pathway is amino-acid biosynthesis; L-histidine biosynthesis; L-histidine from 5-phospho-alpha-D-ribose 1-diphosphate: step 5/9. In terms of biological role, IGPS catalyzes the conversion of PRFAR and glutamine to IGP, AICAR and glutamate. The HisF subunit catalyzes the cyclization activity that produces IGP and AICAR from PRFAR using the ammonia provided by the HisH subunit. This chain is Imidazole glycerol phosphate synthase subunit HisF, found in Shewanella sp. (strain ANA-3).